A 568-amino-acid polypeptide reads, in one-letter code: Putative ABC transporter ATP-binding protein EF_2153 (568 aa).

2 consecutive ABC transporter domains span residues 6-247 (ITFN…GIRE) and 301-535 (LRLE…ASLK). ATP-binding positions include 40–47 (GPSGSGKS) and 335–342 (GKNGAGKS).

This sequence belongs to the ABC transporter superfamily.

Its subcellular location is the cell membrane. Its function is as follows. Probably part of an ABC transporter complex. Responsible for energy coupling to the transport system. The polypeptide is Putative ABC transporter ATP-binding protein EF_2153 (Enterococcus faecalis (strain ATCC 700802 / V583)).